The chain runs to 469 residues: RNA-editing ligase 1, mitochondrial (469 aa).

Residues 1–44 (MQLQRLGAPLLKRLVGGCIRQSTAPIMPCVVVSGSGGFLTPVRT) constitute a mitochondrion transit peptide. ATP is bound by residues 59 to 61 (IEI), 86 to 92 (EKVHGTN), Asn-92, Arg-111, Glu-159, Phe-209, and 307 to 309 (KLR). Lys-87 functions as the N6-AMP-lysine intermediate in the catalytic mechanism. Residues 450 to 469 (AAAQSEAIPPLSPAAPTKGE) are disordered.

Belongs to the RNA ligase 2 family. As to quaternary structure, component of the RNA editing complex (editosome), a 1600 kDa complex composed of at least 20 proteins. Interacts with terminal uridylyltransferase MEAT1.

The protein resides in the mitochondrion. The catalysed reaction is ATP + (ribonucleotide)n-3'-hydroxyl + 5'-phospho-(ribonucleotide)m = (ribonucleotide)n+m + AMP + diphosphate.. Functionally, essential for RNA editing. RNA editing in kinetoplastid mitochondria inserts and deletes uridylates at multiple sites in pre-mRNAs as directed by guide RNAs. This chain is RNA-editing ligase 1, mitochondrial (REL1), found in Trypanosoma brucei brucei (strain 927/4 GUTat10.1).